A 439-amino-acid polypeptide reads, in one-letter code: Hydroxyornithine transacylase SID3 (439 aa).

The short motif at 437 to 439 (SKL) is the PTS1-type peroxisomal targeting signal element.

Belongs to the lysine N-acyltransferase mbtK family.

It is found in the peroxisome. The protein operates within siderophore biosynthesis. Its function is as follows. Hydroxyornithine transacylase; part of the gene cluster that mediates the biosynthesis of hydroxamate-containing siderophores that play a critical role in virulence via intracellular iron acquisition during macrophage infection. In Ajellomyces capsulatus (Darling's disease fungus), this protein is Hydroxyornithine transacylase SID3.